Here is a 319-residue protein sequence, read N- to C-terminus: G-protein coupled receptor 171 (319 aa).

Topologically, residues 1 to 21 (MTNSSTFCPVYRDLEPFTYFF) are extracellular. N-linked (GlcNAc...) asparagine glycosylation is present at asparagine 3. A helical transmembrane segment spans residues 22-42 (YLVFLIGIIGSCFATWAFIQK). The Cytoplasmic segment spans residues 43–48 (NTNHRC). Residues 49 to 69 (VSIYLINLLTADFLLTLALPV) form a helical membrane-spanning segment. Residues 70-89 (KITVDLGVAPWKLRIFHCQV) are Extracellular-facing. The helical transmembrane segment at 90 to 110 (TACLIYINMYLSIIFLAFVSI) threads the bilayer. The Cytoplasmic segment spans residues 111–132 (DRCLQLTYSCKIYRIQEPGFAK). A helical transmembrane segment spans residues 133–153 (MISAVVWLMVLLIMVPNMIIP). The Extracellular portion of the chain corresponds to 154–181 (IKDIKEKPNVGCMEFKSEFGRNWHLLTN). Residues 182 to 202 (FISIAIFFNFSAIILISNCLV) form a helical membrane-spanning segment. Residues 203 to 224 (IRQLYRNKDNENYPNVKRALIS) are Cytoplasmic-facing. Residues 225-245 (ILLVTTGYIICFVPYHIVRIP) form a helical membrane-spanning segment. Topologically, residues 246-268 (YTLSQTEVISDCSTRISLFKAKE) are extracellular. Residues 269–289 (ATLLLAVSNLCFDPILYYHLS) form a helical membrane-spanning segment. The Cytoplasmic segment spans residues 290–319 (KAFRLKITETFASHKESKAQKEKPRSENNA).

The protein belongs to the G-protein coupled receptor 1 family.

It localises to the cell membrane. Its function is as follows. G-protein coupled receptor for Big LEN, a 16-amino acid neuropeptide produced from the precursor protein, proSAAS (encoded by PCSK1N). Acts through a G(i)-alpha-mediated pathway in response to bigLEN. Big LEN-GPR171 system plays an important role in regulating feeding and metabolism. Also plays a role in modulating fear and anxiety-like behaviors in the basolateral amygdala. Big LEN-GPR171 modulates the mu-type opioid receptor signaling and antinociception. Acts as a negative regulator T cell function. The chain is G-protein coupled receptor 171 (GPR171) from Bos taurus (Bovine).